The sequence spans 351 residues: UDP-N-acetylenolpyruvoylglucosamine reductase (351 aa).

Positions 11–213 constitute an FAD-binding PCMH-type domain; the sequence is GVGGSIACFI…KQVRDQVLRI (203 aa). The active site involves R158. The active-site Proton donor is the S239. The active site involves E343.

It belongs to the MurB family. FAD serves as cofactor.

The protein resides in the cytoplasm. The catalysed reaction is UDP-N-acetyl-alpha-D-muramate + NADP(+) = UDP-N-acetyl-3-O-(1-carboxyvinyl)-alpha-D-glucosamine + NADPH + H(+). It participates in cell wall biogenesis; peptidoglycan biosynthesis. In terms of biological role, cell wall formation. The protein is UDP-N-acetylenolpyruvoylglucosamine reductase of Tropheryma whipplei (strain Twist) (Whipple's bacillus).